The primary structure comprises 447 residues: uncharacterized protein (447 aa).

Residues 29 to 201 form the FAD-binding PCMH-type domain; that stretch reads VDVYPLVFVF…TQYTFKVHRA (173 aa).

This sequence belongs to the oxygen-dependent FAD-linked oxidoreductase family. Requires FAD as cofactor.

The protein resides in the spore coat. This is an uncharacterized protein from Bacillus subtilis (strain 168).